Reading from the N-terminus, the 572-residue chain is Urease subunit alpha (572 aa).

Residues 134-572 (GGIDAHVHFI…LPMAQRYFLF (439 aa)) form the Urease domain. Ni(2+) contacts are provided by H139, H141, and K222. Residue K222 is modified to N6-carboxylysine. Substrate is bound at residue H224. Positions 251 and 277 each coordinate Ni(2+). Residue H325 is the Proton donor of the active site. D365 contributes to the Ni(2+) binding site.

The protein belongs to the metallo-dependent hydrolases superfamily. Urease alpha subunit family. Heterotrimer of UreA (gamma), UreB (beta) and UreC (alpha) subunits. Three heterotrimers associate to form the active enzyme. It depends on Ni cation as a cofactor. Post-translationally, carboxylation allows a single lysine to coordinate two nickel ions.

It localises to the cytoplasm. It catalyses the reaction urea + 2 H2O + H(+) = hydrogencarbonate + 2 NH4(+). It participates in nitrogen metabolism; urea degradation; CO(2) and NH(3) from urea (urease route): step 1/1. The protein is Urease subunit alpha of Synechococcus sp. (strain JA-2-3B'a(2-13)) (Cyanobacteria bacterium Yellowstone B-Prime).